The sequence spans 126 residues: Large ribosomal subunit protein bL17 (126 aa).

It belongs to the bacterial ribosomal protein bL17 family. As to quaternary structure, part of the 50S ribosomal subunit. Contacts protein L32.

This chain is Large ribosomal subunit protein bL17, found in Vibrio atlanticus (strain LGP32) (Vibrio splendidus (strain Mel32)).